The primary structure comprises 394 residues: 3-hydroxybenzoate 6-hydroxylase 1 (394 aa).

The protein belongs to the 3-hydroxybenzoate 6-hydroxylase family. Homotrimer. The cofactor is FAD.

The enzyme catalyses 3-hydroxybenzoate + NADH + O2 + H(+) = 2,5-dihydroxybenzoate + NAD(+) + H2O. With respect to regulation, inhibited by manganese, copper, mercury, and iron ions. Functionally, catalyzes the NAD- or NADP-dependent conversion of 3-hydroxybenzoate to gentisate. The affinity of the enzyme toward NAD is twice as high as for NADP. The enzyme shows higher specific activities against the intermediates in the degradation of 2,5-xylenol and 3,5-xylenol, 3-hydroxy-4-methylbenzoate and 3-hydroxy-5-methylbenzoate, respectively, than for 3-hydroxybenzoate. It also shows activity against 3-substituted benzoates. This Aquipseudomonas alcaligenes (Pseudomonas alcaligenes) protein is 3-hydroxybenzoate 6-hydroxylase 1 (xlnD).